The chain runs to 146 residues: Large ribosomal subunit protein uL15 (146 aa).

Residues 1–65 (MSDIQLNTLK…GQMPLQRRLP (65 aa)) form a disordered region. The span at 24-34 (RGIGSGLGKTA) shows a compositional bias: gly residues.

Belongs to the universal ribosomal protein uL15 family. As to quaternary structure, part of the 50S ribosomal subunit.

Its function is as follows. Binds to the 23S rRNA. This Bordetella petrii (strain ATCC BAA-461 / DSM 12804 / CCUG 43448) protein is Large ribosomal subunit protein uL15.